The chain runs to 525 residues: Adenosine deaminase AGSA (525 aa).

Positions 1 to 25 (MSSFSTHNFVAIATFVCWFCCLATA) are cleaved as a signal peptide. An N-linked (GlcNAc...) asparagine glycan is attached at N81. Residues H117 and H119 each contribute to the Zn(2+) site. D120 is a binding site for substrate. An N-linked (GlcNAc...) asparagine glycan is attached at N132. The cysteines at positions 142 and 163 are disulfide-linked. The N-linked (GlcNAc...) asparagine glycan is linked to N188. Substrate-binding positions include 207–214 (WVRFNKYF) and G329. N334 carries an N-linked (GlcNAc...) asparagine glycan. Residue H361 participates in Zn(2+) binding. E364 functions as the Proton donor in the catalytic mechanism. The active-site Proton acceptor is the H389. D446 contacts Zn(2+). Residue D447 coordinates substrate.

Belongs to the metallo-dependent hydrolases superfamily. Adenosine and AMP deaminases family. ADGF subfamily. Zn(2+) serves as cofactor. Detected in egg cordons and in the developing central nervous system. Not detected in adult central nervous system (at protein level). Atrial gland.

The protein resides in the secreted. The enzyme catalyses adenosine + H2O + H(+) = inosine + NH4(+). Adenosine deaminase that may contribute to the degradation of extracellular adenosine, a signaling molecule that controls a variety of cellular responses. May play a role in the regulation of cell proliferation. The chain is Adenosine deaminase AGSA from Aplysia californica (California sea hare).